The chain runs to 110 residues: Thiosulfate sulfurtransferase GlpE (110 aa).

Residues lysine 17–alanine 105 enclose the Rhodanese domain. Cysteine 65 serves as the catalytic Cysteine persulfide intermediate.

This sequence belongs to the GlpE family.

The protein localises to the cytoplasm. The catalysed reaction is thiosulfate + hydrogen cyanide = thiocyanate + sulfite + 2 H(+). It carries out the reaction thiosulfate + [thioredoxin]-dithiol = [thioredoxin]-disulfide + hydrogen sulfide + sulfite + 2 H(+). Functionally, transferase that catalyzes the transfer of sulfur from thiosulfate to thiophilic acceptors such as cyanide or dithiols. May function in a CysM-independent thiosulfate assimilation pathway by catalyzing the conversion of thiosulfate to sulfite, which can then be used for L-cysteine biosynthesis. This is Thiosulfate sulfurtransferase GlpE from Pseudomonas putida (strain ATCC 700007 / DSM 6899 / JCM 31910 / BCRC 17059 / LMG 24140 / F1).